Reading from the N-terminus, the 1105-residue chain is Integrator complex subunit 2 (1105 aa).

The chain crosses the membrane as a helical span at residues 822-842; that stretch reads FVFCSPYLLMILLRILKGSLA.

Belongs to the Integrator subunit 2 family. In terms of assembly, belongs to the multiprotein complex Integrator, at least composed of IntS1, IntS2, IntS3, IntS4, omd/IntS5, IntS6, defl/IntS7, IntS8, IntS9, IntS10, IntS11, IntS12, asun/IntS13, IntS14 and IntS15. The core complex associates with protein phosphatase 2A subunits mts/PP2A and Pp2A-29B, to form the Integrator-PP2A (INTAC) complex.

The protein localises to the nucleus membrane. The protein resides in the nucleus. Functionally, component of the integrator complex, a multiprotein complex that terminates RNA polymerase II (Pol II) transcription in the promoter-proximal region of genes. The integrator complex provides a quality checkpoint during transcription elongation by driving premature transcription termination of transcripts that are unfavorably configured for transcriptional elongation: the complex terminates transcription by (1) catalyzing dephosphorylation of the C-terminal domain (CTD) of Pol II subunit Polr2A/Rbp1 and Spt5, and (2) degrading the exiting nascent RNA transcript via endonuclease activity. The integrator complex is also involved in the 3'-end processing of the U7 snRNA, and also the spliceosomal snRNAs U1, U2, U4 and U5. This chain is Integrator complex subunit 2, found in Drosophila melanogaster (Fruit fly).